Reading from the N-terminus, the 223-residue chain is ATP-dependent dethiobiotin synthetase BioD (223 aa).

ATP is bound at residue 12–17 (EIGKTH). Thr16 contacts Mg(2+). Residue Lys37 is part of the active site. Ser41 lines the substrate pocket. ATP contacts are provided by residues Asp52 and 118-121 (EGVG). The Mg(2+) site is built by Asp52 and Glu118.

This sequence belongs to the dethiobiotin synthetase family. As to quaternary structure, homodimer. Requires Mg(2+) as cofactor.

The protein resides in the cytoplasm. It catalyses the reaction (7R,8S)-7,8-diammoniononanoate + CO2 + ATP = (4R,5S)-dethiobiotin + ADP + phosphate + 3 H(+). It functions in the pathway cofactor biosynthesis; biotin biosynthesis; biotin from 7,8-diaminononanoate: step 1/2. Catalyzes a mechanistically unusual reaction, the ATP-dependent insertion of CO2 between the N7 and N8 nitrogen atoms of 7,8-diaminopelargonic acid (DAPA, also called 7,8-diammoniononanoate) to form a ureido ring. The polypeptide is ATP-dependent dethiobiotin synthetase BioD (Acidiphilium cryptum (strain JF-5)).